Consider the following 306-residue polypeptide: Elongation factor Ts (306 aa).

An involved in Mg(2+) ion dislocation from EF-Tu region spans residues 80–83; sequence TDFV.

Belongs to the EF-Ts family.

Its subcellular location is the cytoplasm. Its function is as follows. Associates with the EF-Tu.GDP complex and induces the exchange of GDP to GTP. It remains bound to the aminoacyl-tRNA.EF-Tu.GTP complex up to the GTP hydrolysis stage on the ribosome. This chain is Elongation factor Ts, found in Leptothrix cholodnii (strain ATCC 51168 / LMG 8142 / SP-6) (Leptothrix discophora (strain SP-6)).